A 166-amino-acid chain; its full sequence is Eukaryotic translation initiation factor 5A (166 aa).

Residues 1–21 form a disordered region; it reads MSDEDHDFSHQGGGDNASKTY. A Hypusine modification is found at K53. The segment at 101-121 is disordered; it reads EDPSLPSHLSLMDDEGESRED. The segment covering 112 to 121 has biased composition (acidic residues); sequence MDDEGESRED.

This sequence belongs to the eIF-5A family. Lys-53 undergoes hypusination, a unique post-translational modification that consists in the addition of a butylamino group from spermidine to lysine side chain, leading to the formation of the unusual amino acid hypusine. eIF-5As are the only known proteins to undergo this modification, which is essential for their function.

Its subcellular location is the cytoplasm. Its function is as follows. Translation factor that promotes translation elongation and termination, particularly upon ribosome stalling at specific amino acid sequence contexts. Binds between the exit (E) and peptidyl (P) site of the ribosome and promotes rescue of stalled ribosome: specifically required for efficient translation of polyproline-containing peptides as well as other motifs that stall the ribosome. Acts as a ribosome quality control (RQC) cofactor by joining the RQC complex to facilitate peptidyl transfer during CAT tailing step. The protein is Eukaryotic translation initiation factor 5A of Leishmania donovani.